The chain runs to 141 residues: VLSGSDKNNVKGVFGKIGGHAEEYGAETLERMFATYPQTKTYFPHFDLQHGSAQVKAHGKKVAAALVEAANHIDDISGALSKLSDLHAQKLRVDPVNFKLLGQCFLVVVAIHHPSVLTPEVHASLDKFLCAVGNVLTAKYR.

The Globin domain maps to 1-141 (VLSGSDKNNV…VGNVLTAKYR (141 aa)). H58 is an O2 binding site. H87 serves as a coordination point for heme b.

The protein belongs to the globin family. Heterotetramer of two alpha chains and two beta chains. In terms of tissue distribution, red blood cells.

Its function is as follows. Involved in oxygen transport from the lung to the various peripheral tissues. The sequence is that of Hemoglobin subunit alpha-1 from Stercorarius maccormicki (South polar skua).